Here is a 707-residue protein sequence, read N- to C-terminus: F-box/WD repeat-containing protein 7 (707 aa).

The disordered stretch occupies residues Met1–Asp151. Ser26 carries the phosphoserine; by ATM modification. A compositionally biased stretch (low complexity) spans Gly57 to Gly68. The segment covering Gln69–Phe84 has biased composition (polar residues). Residues Val87 to Asp129 are compositionally biased toward acidic residues. A compositionally biased stretch (basic and acidic residues) spans Asp130–His139. The residue at position 205 (Thr205) is a Phosphothreonine. A Phosphoserine; by SGK1 modification is found at Ser227. One can recognise an F-box domain in the interval Arg278 to Lys324. WD repeat units lie at residues Gly378–Val418, His420–Thr456, Gly459–Met498, His500–Thr536, Gly539–Thr578, His580–Gln618, and Lys622–Asn659.

In terms of assembly, homodimer; homodimerization plays a role in substrate binding and/or ubiquitination and degradation. Component of the SCF(FBXW7) complex consisting of CUL1, RBX1, SKP1 and FBXW7. Interacts (via F-box domain) with SKP1. Interacts (via F-box domain) with pseudophosphatase STYX; the interaction is direct and prevents FBXW7 interaction with SKP1. Interacts with cyclin-E (CCNE1 or CCNE2). Interacts with PSEN1. Forms a trimeric complex with NOTCH1 and SGK1. Interacts with NOTCH1 intracellular domain/NICD and NOTCH4 intracellular domain/NICD. Interacts with NOTCH2 intracellular domain (N2ICD). Interacts with MYC (when phosphorylated). Interacts with USP28, counteracting ubiquitination of MYC. Interacts with JUN. Found in a complex with JUN and PRR7. Interacts with JUN and PRR7; the interaction inhibits ubiquitination-mediated JUN degradation, promoting its phosphorylation and transcriptional activity. Interacts (when phosphorylated at Thr-205) with PIN1, disrupting FBXW7 dimerization and promoting FBXW7 autoubiquitination and degradation. Interacts with UBE2QL1. Interacts with FAM83D; promotes FBXW7 degradation. Interacts with MYCN; FBXW7 competes with AURKA for binding to unphosphorylated MYCN but not for binding to phosphorylated MYCN. Interacts with STOML1. Interacts with NFE2L1. Interacts with USP36, counteracting ubiquitination of MYC. Interacts with NR1D1. Interacts with RICTOR; mediates RICTOR ubiquitination and degradation. Interacts with USP38, counteracting ubiquitination of MYC. (Microbial infection) Interacts (via WD repeats) with SV40 large T antigen (via CPD region). Phosphorylation at Thr-205 promotes interaction with PIN1, leading to disrupt FBXW7 dimerization and promoting FBXW7 autoubiquitination and degradation. Phosphorylated by ATM at Ser-26 in response to DNA damage, promoting recruitment to DNA damage sites and 'Lys-63'-linked ubiquitination of phosphorylated XRCC4. Post-translationally, ubiquitinated: autoubiquitinates following phosphorylation at Thr-205 and subsequent interaction with PIN1. Ubiquitination leads to its proteasomal degradation. In terms of tissue distribution, widely expressed. Expressed in brain.

It localises to the nucleus. It is found in the nucleoplasm. The protein resides in the chromosome. Its subcellular location is the cytoplasm. The protein localises to the nucleolus. Its pathway is protein modification; protein ubiquitination. Its function is as follows. Substrate recognition component of a SCF (SKP1-CUL1-F-box protein) E3 ubiquitin-protein ligase complex which mediates the ubiquitination and subsequent proteasomal degradation of target proteins. Recognizes and binds phosphorylated sites/phosphodegrons within target proteins and thereafter brings them to the SCF complex for ubiquitination. Identified substrates include cyclin-E (CCNE1 or CCNE2), DISC1, JUN, MYC, NOTCH1 released notch intracellular domain (NICD), NFE2L1, NOTCH2, MCL1, MLST8, RICTOR, and probably PSEN1. Acts as a negative regulator of JNK signaling by binding to phosphorylated JUN and promoting its ubiquitination and subsequent degradation. Involved in bone homeostasis and negative regulation of osteoclast differentiation. Regulates the amplitude of the cyclic expression of hepatic core clock genes and genes involved in lipid and glucose metabolism via ubiquitination and proteasomal degradation of their transcriptional repressor NR1D1; CDK1-dependent phosphorylation of NR1D1 is necessary for SCF(FBXW7)-mediated ubiquitination. Also able to promote 'Lys-63'-linked ubiquitination in response to DNA damage. The SCF(FBXW7) complex facilitates double-strand break repair following phosphorylation by ATM: phosphorylation promotes localization to sites of double-strand breaks and 'Lys-63'-linked ubiquitination of phosphorylated XRCC4, enhancing DNA non-homologous end joining. The sequence is that of F-box/WD repeat-containing protein 7 from Homo sapiens (Human).